The following is a 254-amino-acid chain: tRNA pseudouridine synthase A (254 aa).

Asp52 (nucleophile) is an active-site residue. Tyr111 is a substrate binding site.

The protein belongs to the tRNA pseudouridine synthase TruA family. In terms of assembly, homodimer.

It catalyses the reaction uridine(38/39/40) in tRNA = pseudouridine(38/39/40) in tRNA. Formation of pseudouridine at positions 38, 39 and 40 in the anticodon stem and loop of transfer RNAs. In Rhizorhabdus wittichii (strain DSM 6014 / CCUG 31198 / JCM 15750 / NBRC 105917 / EY 4224 / RW1) (Sphingomonas wittichii), this protein is tRNA pseudouridine synthase A.